The following is a 305-amino-acid chain: Acetyl-coenzyme A carboxylase carboxyl transferase subunit beta (305 aa).

Positions 27-296 constitute a CoA carboxyltransferase N-terminal domain; sequence LWVKCSACRE…PAAKADLAAR (270 aa). Cys-31, Cys-34, Cys-50, and Cys-53 together coordinate Zn(2+). The segment at 31–53 adopts a C4-type zinc-finger fold; sequence CSACRELIYKKQLNDNLKVCPKC.

It belongs to the AccD/PCCB family. As to quaternary structure, acetyl-CoA carboxylase is a heterohexamer composed of biotin carboxyl carrier protein (AccB), biotin carboxylase (AccC) and two subunits each of ACCase subunit alpha (AccA) and ACCase subunit beta (AccD). Requires Zn(2+) as cofactor.

It is found in the cytoplasm. The catalysed reaction is N(6)-carboxybiotinyl-L-lysyl-[protein] + acetyl-CoA = N(6)-biotinyl-L-lysyl-[protein] + malonyl-CoA. It functions in the pathway lipid metabolism; malonyl-CoA biosynthesis; malonyl-CoA from acetyl-CoA: step 1/1. Functionally, component of the acetyl coenzyme A carboxylase (ACC) complex. Biotin carboxylase (BC) catalyzes the carboxylation of biotin on its carrier protein (BCCP) and then the CO(2) group is transferred by the transcarboxylase to acetyl-CoA to form malonyl-CoA. The chain is Acetyl-coenzyme A carboxylase carboxyl transferase subunit beta from Chloroflexus aggregans (strain MD-66 / DSM 9485).